A 755-amino-acid polypeptide reads, in one-letter code: Polyribonucleotide nucleotidyltransferase (755 aa).

2 residues coordinate Mg(2+): Asp-545 and Asp-551. The KH domain occupies 611–670 (PRITAITVPVNKIGEVIGPKGKTINSITEETGANISIEEDGTVYVSAASGAAAEAAIEKI). Positions 682–751 (GERFLGTVVK…NRGKISLAPV (70 aa)) constitute an S1 motif domain.

Belongs to the polyribonucleotide nucleotidyltransferase family. It depends on Mg(2+) as a cofactor.

It localises to the cytoplasm. The enzyme catalyses RNA(n+1) + phosphate = RNA(n) + a ribonucleoside 5'-diphosphate. In terms of biological role, involved in mRNA degradation. Catalyzes the phosphorolysis of single-stranded polyribonucleotides processively in the 3'- to 5'-direction. This chain is Polyribonucleotide nucleotidyltransferase, found in Corynebacterium diphtheriae (strain ATCC 700971 / NCTC 13129 / Biotype gravis).